The primary structure comprises 225 residues: Octanoyltransferase (225 aa).

A BPL/LPL catalytic domain is found at 37–217 (SDTPDEFWVV…ELASLIGYQT (181 aa)). Residues 76 to 83 (RGGQVTYH), 148 to 150 (SLG), and 161 to 163 (GLA) contribute to the substrate site. Catalysis depends on cysteine 179, which acts as the Acyl-thioester intermediate.

The protein belongs to the LipB family.

The protein resides in the cytoplasm. It carries out the reaction octanoyl-[ACP] + L-lysyl-[protein] = N(6)-octanoyl-L-lysyl-[protein] + holo-[ACP] + H(+). Its pathway is protein modification; protein lipoylation via endogenous pathway; protein N(6)-(lipoyl)lysine from octanoyl-[acyl-carrier-protein]: step 1/2. Its function is as follows. Catalyzes the transfer of endogenously produced octanoic acid from octanoyl-acyl-carrier-protein onto the lipoyl domains of lipoate-dependent enzymes. Lipoyl-ACP can also act as a substrate although octanoyl-ACP is likely to be the physiological substrate. The protein is Octanoyltransferase of Aeromonas salmonicida (strain A449).